Reading from the N-terminus, the 306-residue chain is tRNA pseudouridine synthase B (306 aa).

The Nucleophile role is filled by Asp-48.

The protein belongs to the pseudouridine synthase TruB family. Type 1 subfamily.

The enzyme catalyses uridine(55) in tRNA = pseudouridine(55) in tRNA. Its function is as follows. Responsible for synthesis of pseudouridine from uracil-55 in the psi GC loop of transfer RNAs. This Chromobacterium violaceum (strain ATCC 12472 / DSM 30191 / JCM 1249 / CCUG 213 / NBRC 12614 / NCIMB 9131 / NCTC 9757 / MK) protein is tRNA pseudouridine synthase B.